The following is a 305-amino-acid chain: UDP-3-O-acyl-N-acetylglucosamine deacetylase (305 aa).

Residues His-79, His-238, and Asp-242 each contribute to the Zn(2+) site. Catalysis depends on His-265, which acts as the Proton donor.

It belongs to the LpxC family. It depends on Zn(2+) as a cofactor.

The catalysed reaction is a UDP-3-O-[(3R)-3-hydroxyacyl]-N-acetyl-alpha-D-glucosamine + H2O = a UDP-3-O-[(3R)-3-hydroxyacyl]-alpha-D-glucosamine + acetate. The protein operates within glycolipid biosynthesis; lipid IV(A) biosynthesis; lipid IV(A) from (3R)-3-hydroxytetradecanoyl-[acyl-carrier-protein] and UDP-N-acetyl-alpha-D-glucosamine: step 2/6. Catalyzes the hydrolysis of UDP-3-O-myristoyl-N-acetylglucosamine to form UDP-3-O-myristoylglucosamine and acetate, the committed step in lipid A biosynthesis. The sequence is that of UDP-3-O-acyl-N-acetylglucosamine deacetylase from Sodalis glossinidius (strain morsitans).